The sequence spans 475 residues: Glutamate--tRNA ligase (475 aa).

A 'HIGH' region motif is present at residues 11-21; sequence PSPTGFLHIGG. A 'KMSKS' region motif is present at residues 240-244; the sequence is KLSKR. Lys243 is a binding site for ATP.

Belongs to the class-I aminoacyl-tRNA synthetase family. Glutamate--tRNA ligase type 1 subfamily. As to quaternary structure, monomer.

It is found in the cytoplasm. The enzyme catalyses tRNA(Glu) + L-glutamate + ATP = L-glutamyl-tRNA(Glu) + AMP + diphosphate. Its function is as follows. Catalyzes the attachment of glutamate to tRNA(Glu) in a two-step reaction: glutamate is first activated by ATP to form Glu-AMP and then transferred to the acceptor end of tRNA(Glu). The chain is Glutamate--tRNA ligase from Bradyrhizobium diazoefficiens (strain JCM 10833 / BCRC 13528 / IAM 13628 / NBRC 14792 / USDA 110).